Here is a 445-residue protein sequence, read N- to C-terminus: UDP-N-acetylmuramate--L-alanine ligase (445 aa).

Residue 108-114 coordinates ATP; that stretch reads GSDGKTT.

The protein belongs to the MurCDEF family.

The protein resides in the cytoplasm. It carries out the reaction UDP-N-acetyl-alpha-D-muramate + L-alanine + ATP = UDP-N-acetyl-alpha-D-muramoyl-L-alanine + ADP + phosphate + H(+). It functions in the pathway cell wall biogenesis; peptidoglycan biosynthesis. Functionally, cell wall formation. This Pseudothermotoga lettingae (strain ATCC BAA-301 / DSM 14385 / NBRC 107922 / TMO) (Thermotoga lettingae) protein is UDP-N-acetylmuramate--L-alanine ligase.